The sequence spans 711 residues: Forkhead box protein P1 (711 aa).

Positions 1–19 (MMQESGSEAKSNGSTIQNG) are enriched in polar residues. A disordered region spans residues 1-41 (MMQESGSEAKSNGSTIQNGSSGGNHLLECGTLRDTRSNGEA). Residue Ser-115 is modified to Phosphoserine. Disordered stretches follow at residues 273-292 (HTAEETTGSNHSSLDLTSTC) and 305-332 (MNPHASTNGQLSVHTPKRESLSHEEHPH). Residues 305–317 (MNPHASTNGQLSV) show a composition bias toward polar residues. Residues 320–332 (PKRESLSHEEHPH) are compositionally biased toward basic and acidic residues. A Glycyl lysine isopeptide (Lys-Gly) (interchain with G-Cter in SUMO2) cross-link involves residue Lys-321. Residues 340-365 (GVCKWPGCEAVCDDFPAFLKHLNSEH) form a C2H2-type zinc finger. The tract at residues 382-403 (VQQLELQLAKDKERLQAMMTHL) is leucine-zipper. Glycyl lysine isopeptide (Lys-Gly) (interchain with G-Cter in SUMO2) cross-links involve residues Lys-406 and Lys-411. Residues 416–420 (PLNLV) are CTBP1-binding. The span at 424–437 (TLSKSASEASPQSL) shows a compositional bias: polar residues. The disordered stretch occupies residues 424-456 (TLSKSASEASPQSLPHTPTTPTAPLTPVTQGPS). Positions 438-452 (PHTPTTPTAPLTPVT) are enriched in low complexity. Residue Lys-476 forms a Glycyl lysine isopeptide (Lys-Gly) (interchain with G-Cter in SUMO2) linkage. The fork-head DNA-binding region spans 499 to 589 (RPPFTYASLI…PQKISGNPSL (91 aa)). Residues 645–711 (EHTNSNESDS…EDEPVNEDME (67 aa)) form a disordered region. The segment covering 646–657 (HTNSNESDSSPG) has biased composition (polar residues). Thr-687 carries the post-translational modification Phosphothreonine. Residue Ser-692 is modified to Phosphoserine. Residues 701 to 711 (YEDEPVNEDME) are compositionally biased toward acidic residues.

In terms of assembly, forms homodimers and heterodimers with FOXP2 and FOXP4. Dimerization is required for DNA-binding. Self-associates. Interacts with CTBP1. Interacts with NCOR2 and AR. Interacts with FOXP2. Interacts with TBR1. Interacts with AURKA; this interaction facilitates the phosphorylation of FOXP1, which suppresses the expression of FBXL7. Interacts with ZMYM2.

The protein localises to the nucleus. Transcriptional repressor. Can act with CTBP1 to synergistically repress transcription but CTPBP1 is not essential. Plays an important role in the specification and differentiation of lung epithelium. Acts cooperatively with FOXP4 to regulate lung secretory epithelial cell fate and regeneration by restricting the goblet cell lineage program; the function may involve regulation of AGR2. Essential transcriptional regulator of B-cell development. Involved in regulation of cardiac muscle cell proliferation. Involved in the columnar organization of spinal motor neurons. Promotes the formation of the lateral motor neuron column (LMC) and the preganglionic motor column (PGC) and is required for respective appropriate motor axon projections. The segment-appropriate generation of spinal cord motor columns requires cooperation with other Hox proteins. Can regulate PITX3 promoter activity; may promote midbrain identity in embryonic stem cell-derived dopamine neurons by regulating PITX3. Negatively regulates the differentiation of T follicular helper cells T(FH)s. Involved in maintenance of hair follicle stem cell quiescence; the function probably involves regulation of FGF18. Represses transcription of various pro-apoptotic genes and cooperates with NF-kappa B-signaling in promoting B-cell expansion by inhibition of caspase-dependent apoptosis. Binds to CSF1R promoter elements and is involved in regulation of monocyte differentiation and macrophage functions; repression of CSF1R in monocytes seems to involve NCOR2 as corepressor. Involved in endothelial cell proliferation, tube formation and migration indicative for a role in angiogenesis; the role in neovascularization seems to implicate suppression of SEMA5B. Can negatively regulate androgen receptor signaling. Acts as a transcriptional activator of the FBXL7 promoter; this activity is regulated by AURKA. This chain is Forkhead box protein P1 (Foxp1), found in Rattus norvegicus (Rat).